The sequence spans 259 residues: Energy-coupling factor transporter ATP-binding protein EcfA1 (259 aa).

The ABC transporter domain maps to 3–230 (ITLNSVSFRY…EFDDVEIPFK (228 aa)). 38 to 43 (GSGKTT) lines the ATP pocket. Residue E157 is the Proton acceptor of the active site.

It belongs to the ABC transporter superfamily. Energy-coupling factor EcfA family. In terms of assembly, forms a heterodimer with EcfA2. Forms a stable energy-coupling factor (ECF) transporter complex composed of 2 membrane-embedded substrate-binding proteins (S component, RibU, BioY), 2 ATP-binding proteins (A component) and 2 transmembrane proteins (T component) upon coexpression in E.coli. Stable subcomplexes with both A plus T components can also be isolated. This complex interacts with at least 2 substrate-specific components, BioY and RibU.

Its subcellular location is the cell inner membrane. In terms of biological role, ATP-binding (A) component of a common energy-coupling factor (ECF) ABC-transporter complex. Unlike classic ABC transporters this ECF transporter provides the energy necessary to transport a number of different substrates. Expression of the complex plus RibU in E.coli allows riboflavin uptake; uptake does not occur in the absence of RibU or the EcfA1A2T complex. The protein is Energy-coupling factor transporter ATP-binding protein EcfA1 of Thermotoga maritima (strain ATCC 43589 / DSM 3109 / JCM 10099 / NBRC 100826 / MSB8).